The primary structure comprises 273 residues: ATLKDITRRLKSIKNIQKITKSMKMVAAAKYARAERELKPARVYGTGSLALYEKAEIKGPEDKKKHLIIGVSSDRGLCGAIHSSVAKQMKNDMAALTAAGKEVMIVGIGEKIKSILYRTHSDQFLVSFKDVGRKPPTFGDASVIALELLNSGYEFDEGSIIFNQFKSVISYKTEEKPIFSFSTVVAAENMSIYDDIDADVLQNYQEYNLANIIYYSLKESTTSEQSARMTAMDNASKNASDMIDKLTLTFNRTRQAVITKELIEIISGAAALD.

At lysine 14 the chain carries N6-acetyllysine. The residue at position 24 (lysine 24) is an N6-succinyllysine. At lysine 30 the chain carries N6-acetyllysine. N6-acetyllysine; alternate is present on lysine 90. Lysine 90 carries the N6-succinyllysine; alternate modification. N6-acetyllysine is present on lysine 113. The residue at position 121 (serine 121) is a Phosphoserine. Lysine 129 is subject to N6-acetyllysine; alternate. Lysine 129 is subject to N6-succinyllysine; alternate. The residue at position 172 (lysine 172) is an N6-acetyllysine. Residue lysine 245 is modified to N6-succinyllysine.

It belongs to the ATPase gamma chain family. Component of the ATP synthase complex composed at least of ATP5F1A/subunit alpha, ATP5F1B/subunit beta, ATP5MC1/subunit c (homooctomer), MT-ATP6/subunit a, MT-ATP8/subunit 8, ATP5ME/subunit e, ATP5MF/subunit f, ATP5MG/subunit g, ATP5MK/subunit k, ATP5MJ/subunit j, ATP5F1C/subunit gamma, ATP5F1D/subunit delta, ATP5F1E/subunit epsilon, ATP5PF/subunit F6, ATP5PB/subunit b, ATP5PD/subunit d, ATP5PO/subunit OSCP. ATP synthase complex consists of a soluble F(1) head domain (subunits alpha(3) and beta(3)) - the catalytic core - and a membrane F(0) domain - the membrane proton channel (subunits c, a, 8, e, f, g, k and j). These two domains are linked by a central stalk (subunits gamma, delta, and epsilon) rotating inside the F1 region and a stationary peripheral stalk (subunits F6, b, d, and OSCP). Interacts with FLVCR2; this interaction occurs in the absence of heme and is disrupted upon heme binding.

The protein resides in the mitochondrion inner membrane. Functionally, subunit gamma, of the mitochondrial membrane ATP synthase complex (F(1)F(0) ATP synthase or Complex V) that produces ATP from ADP in the presence of a proton gradient across the membrane which is generated by electron transport complexes of the respiratory chain. ATP synthase complex consist of a soluble F(1) head domain - the catalytic core - and a membrane F(1) domain - the membrane proton channel. These two domains are linked by a central stalk rotating inside the F(1) region and a stationary peripheral stalk. During catalysis, ATP synthesis in the catalytic domain of F(1) is coupled via a rotary mechanism of the central stalk subunits to proton translocation. In vivo, can only synthesize ATP although its ATP hydrolase activity can be activated artificially in vitro. With the central stalk subunit delta, is essential for the biogenesis of F(1) catalytic part of the ATP synthase complex namely in the formation of F1 assembly intermediate. The chain is ATP synthase F(1) complex subunit gamma, mitochondrial from Rattus norvegicus (Rat).